Reading from the N-terminus, the 495-residue chain is Lysine--tRNA ligase (495 aa).

2 residues coordinate Mg(2+): Glu406 and Glu413.

The protein belongs to the class-II aminoacyl-tRNA synthetase family. In terms of assembly, homodimer. The cofactor is Mg(2+).

Its subcellular location is the cytoplasm. It catalyses the reaction tRNA(Lys) + L-lysine + ATP = L-lysyl-tRNA(Lys) + AMP + diphosphate. The chain is Lysine--tRNA ligase from Leptospira interrogans serogroup Icterohaemorrhagiae serovar copenhageni (strain Fiocruz L1-130).